The sequence spans 1761 residues: Laminin subunit beta-4 (1761 aa).

Residues 1–19 (MQFQLTLFLHLGWLSYSKA) form the signal peptide. The Laminin N-terminal domain maps to 24–264 (NRGACHPTTG…ALYEMIVRGS (241 aa)). N-linked (GlcNAc...) asparagine glycans are attached at residues N169, N229, and N246. Intrachain disulfides connect C265–C274, C267–C295, C297–C306, C309–C329, C332–C341, C334–C359, C362–C371, C374–C392, C395–C408, C397–C423, C425–C434, C437–C452, C455–C468, C457–C475, C477–C486, C489–C503, C506–C518, C508–C525, and C527–C536. 4 consecutive Laminin EGF-like domains span residues 265–331 (CFCN…ACRS), 332–394 (CSCN…ACIP), 395–454 (CECD…GCQP), and 455–505 (CDCN…GCSP). A Laminin EGF-like 5; truncated domain is found at 506–552 (CDCDIGGAYSNVCSPKNGQCECRPHVTGRSCSEPAPGYFFAPLNFYL). In terms of domain architecture, Laminin IV type B spans 545-763 (FAPLNFYLYE…LIISMSAKLH (219 aa)). 31 disulfides stabilise this stretch: C769–C781, C771–C788, C790–C799, C802–C814, C817–C829, C819–C836, C838–C847, C850–C860, C863–C872, C865–C879, C882–C891, C894–C908, C913–C938, C940–C949, C952–C967, C970–C984, C972–C991, C994–C1003, C1006–C1019, C1022–C1043, C1024–C1050, C1052–C1061, C1064–C1077, C1080–C1092, C1082–C1099, C1101–C1110, C1113–C1125, C1128–C1140, C1130–C1147, C1149–C1158, and C1161–C1172. 8 consecutive Laminin EGF-like domains span residues 769–816 (CKCH…GCHP), 817–862 (CHCH…SCHP), 863–910 (CPCN…PCRP), 911–969 (CLCP…PCQP), 970–1021 (CACN…TCRR), 1022–1079 (CSCH…GCQS), 1080–1127 (CDCD…RCIP), and 1128–1174 (CDCN…TCLQ). N-linked (GlcNAc...) asparagine glycosylation occurs at N1016. N-linked (GlcNAc...) asparagine glycosylation is present at N1055. The segment at 1175–1375 (CHLCFDQWDH…PDIQILNEKV (201 aa)) is domain II. 5 N-linked (GlcNAc...) asparagine glycosylation sites follow: N1223, N1301, N1326, N1333, and N1354. A coiled-coil region spans residues 1243 to 1301 (KVKDYHDSVRRQIMQLNEQLKAVYEFQDLKDTIERAKNEADLLLEDLQEEIDLQSSVLN). Positions 1376-1408 (CGDPGNVPCVPLPCGGALCTGRKGHRKCRGPGC) are domain alpha. Residues 1409-1761 (HGSLTLSTNA…QEKKYARCYS (353 aa)) are domain I. The stretch at 1416 to 1480 (TNALQKAQEA…SDSEEENINL (65 aa)) forms a coiled coil. N1469, N1517, N1587, N1596, N1609, and N1725 each carry an N-linked (GlcNAc...) asparagine glycan. Residues 1525–1759 (IQKHMQLCED…VEQEKKYARC (235 aa)) are a coiled coil.

In terms of assembly, laminin is a complex glycoprotein, consisting of three different polypeptide chains (alpha, beta, gamma), which are bound to each other by disulfide bonds into a cross-shaped molecule comprising one long and three short arms with globules at each end.

Its subcellular location is the secreted. The protein localises to the extracellular space. The protein resides in the extracellular matrix. It localises to the basement membrane. Binding to cells via a high affinity receptor, laminin is thought to mediate the attachment, migration and organization of cells into tissues during embryonic development by interacting with other extracellular matrix components. This Homo sapiens (Human) protein is Laminin subunit beta-4 (LAMB4).